The sequence spans 700 residues: Elongation factor G (700 aa).

One can recognise a tr-type G domain in the interval 8–290 (SLYRNIGISA…AVIDYLPAPT (283 aa)). GTP is bound by residues 17 to 24 (AHIDAGKT), 88 to 92 (DTPGH), and 142 to 145 (NKMD).

The protein belongs to the TRAFAC class translation factor GTPase superfamily. Classic translation factor GTPase family. EF-G/EF-2 subfamily.

The protein resides in the cytoplasm. Functionally, catalyzes the GTP-dependent ribosomal translocation step during translation elongation. During this step, the ribosome changes from the pre-translocational (PRE) to the post-translocational (POST) state as the newly formed A-site-bound peptidyl-tRNA and P-site-bound deacylated tRNA move to the P and E sites, respectively. Catalyzes the coordinated movement of the two tRNA molecules, the mRNA and conformational changes in the ribosome. The protein is Elongation factor G of Histophilus somni (strain 129Pt) (Haemophilus somnus).